A 165-amino-acid polypeptide reads, in one-letter code: Small ribosomal subunit protein uS17m (165 aa).

This sequence belongs to the universal ribosomal protein uS17 family. In terms of assembly, component of the mitochondrial small ribosomal subunit (mt-SSU). Mature N.crassa 74S mitochondrial ribosomes consist of a small (37S) and a large (54S) subunit. The 37S small subunit contains a 16S ribosomal RNA (16S mt-rRNA) and 32 different proteins. The 54S large subunit contains a 23S rRNA (23S mt-rRNA) and 42 different proteins. uS17m interacts with the F(1)-ATPase inhibitor IF(1) dimer.

Its subcellular location is the mitochondrion. Functionally, component of the mitochondrial ribosome (mitoribosome), a dedicated translation machinery responsible for the synthesis of mitochondrial genome-encoded proteins, including at least some of the essential transmembrane subunits of the mitochondrial respiratory chain. The mitoribosomes are attached to the mitochondrial inner membrane and translation products are cotranslationally integrated into the membrane. This is Small ribosomal subunit protein uS17m (mrps17) from Neurospora crassa (strain ATCC 24698 / 74-OR23-1A / CBS 708.71 / DSM 1257 / FGSC 987).